We begin with the raw amino-acid sequence, 441 residues long: Probable cytosolic Fe-S cluster assembly factor v1g210509 (441 aa).

7 residues coordinate [4Fe-4S] cluster: cysteine 24, cysteine 72, cysteine 75, cysteine 78, cysteine 196, cysteine 252, and cysteine 401.

The protein belongs to the NARF family.

Component of the cytosolic iron-sulfur (Fe/S) protein assembly machinery. Required for maturation of extramitochondrial Fe/S proteins. The polypeptide is Probable cytosolic Fe-S cluster assembly factor v1g210509 (Nematostella vectensis (Starlet sea anemone)).